The sequence spans 436 residues: Chromosomal replication initiator protein DnaA (436 aa).

A domain I, interacts with DnaA modulators region spans residues 1-69; it reads MLADEILELL…AYLYEVKTGK (69 aa). Residues 69–99 are domain II; the sequence is KKPEVEITSQTKLKNIKQNQVNVKQIKAQSS. Residues 100-314 are domain III, AAA+ region; sequence ILNPGYTFEN…GAIINLNAYA (215 aa). The ATP site is built by Gly-144, Gly-146, Lys-147, and Thr-148. Residues 315–436 form a domain IV, binds dsDNA region; sequence SLMRVEITLE…EIKNKILTKG (122 aa).

This sequence belongs to the DnaA family. Oligomerizes as a right-handed, spiral filament on DNA at oriC.

It is found in the cytoplasm. In terms of biological role, plays an essential role in the initiation and regulation of chromosomal replication. ATP-DnaA binds to the origin of replication (oriC) to initiate formation of the DNA replication initiation complex once per cell cycle. Binds the DnaA box (a 9 base pair repeat at the origin) and separates the double-stranded (ds)DNA. Forms a right-handed helical filament on oriC DNA; dsDNA binds to the exterior of the filament while single-stranded (ss)DNA is stabiized in the filament's interior. The ATP-DnaA-oriC complex binds and stabilizes one strand of the AT-rich DNA unwinding element (DUE), permitting loading of DNA polymerase. After initiation quickly degrades to an ADP-DnaA complex that is not apt for DNA replication. Binds acidic phospholipids. In Campylobacter concisus (strain 13826), this protein is Chromosomal replication initiator protein DnaA.